Here is a 527-residue protein sequence, read N- to C-terminus: N-acetylglutamate synthase, mitochondrial (527 aa).

A mitochondrion-targeting transit peptide spans 1–18 (MATAWVATALRSAAAARR). The disordered stretch occupies residues 14-91 (AAARRLRSPG…PLESPAPPAG (78 aa)). Residues 19-369 (LRSPGGPGGS…CGTLFKNAER (351 aa)) form an amino-acid kinase domain (AAK) region. Over residues 54-63 (AHAEDAEGAK) the composition is skewed to basic and acidic residues. Residues 77–89 (TPLPTPLESPAPP) show a composition bias toward pro residues. One can recognise an N-acetyltransferase domain in the interval 368–519 (ERMLRVRNLD…HAKGLPDSFC (152 aa)). Substrate contacts are provided by residues Lys-394, Lys-437, and 467 to 472 (RSRVTN).

This sequence belongs to the acetyltransferase family. In terms of assembly, homodimer. Homotetramer. In terms of processing, probably processed by mitochondrial processing peptidase (MPP). The long form has not yet been isolated. In terms of tissue distribution, highly expressed in the liver and small intestine. Weakly expressed in the kidney, spleen and testis.

The protein resides in the mitochondrion matrix. It catalyses the reaction L-glutamate + acetyl-CoA = N-acetyl-L-glutamate + CoA + H(+). Its pathway is amino-acid biosynthesis; L-arginine biosynthesis; N(2)-acetyl-L-ornithine from L-glutamate: step 1/4. Increased by L-arginine. Functionally, plays a role in the regulation of ureagenesis by producing the essential cofactor N-acetylglutamate (NAG), thus modulating carbamoylphosphate synthase I (CPS1) activity. The chain is N-acetylglutamate synthase, mitochondrial (Nags) from Mus musculus (Mouse).